Here is a 374-residue protein sequence, read N- to C-terminus: Calcium/calmodulin-dependent protein kinase type 1 (374 aa).

Residues 20–276 (YDFRDVLGTG…CEQALQHPWI (257 aa)) enclose the Protein kinase domain. ATP is bound by residues 26 to 34 (LGTGAFSEV) and lysine 49. A Glycyl lysine isopeptide (Lys-Gly) (interchain with G-Cter in ubiquitin) cross-link involves residue lysine 59. Aspartate 141 acts as the Proton acceptor in catalysis. At threonine 177 the chain carries Phosphothreonine; by CaMKK1 and CaMKK2. An autoinhibitory domain region spans residues 276–316 (IAGDTALDKNIHQSVSEQIKKNFAKSKWKQAFNATAVVRHM). Positions 296–317 (KNFAKSKWKQAFNATAVVRHMR) are calmodulin-binding. The Nuclear export signal motif lies at 315-321 (HMRKLQL).

This sequence belongs to the protein kinase superfamily. CAMK Ser/Thr protein kinase family. CaMK subfamily. In terms of assembly, monomer. Interacts with XPO1. In terms of processing, phosphorylated by CaMKK1 and CaMKK2 on Thr-177. Polybiquitinated by the E3 ubiquitin-protein ligase complex SCF(FBXL12), leading to proteasomal degradation. In terms of tissue distribution, ubiquitous.

Its subcellular location is the cytoplasm. It is found in the nucleus. It carries out the reaction L-seryl-[protein] + ATP = O-phospho-L-seryl-[protein] + ADP + H(+). The catalysed reaction is L-threonyl-[protein] + ATP = O-phospho-L-threonyl-[protein] + ADP + H(+). With respect to regulation, activated by Ca(2+)/calmodulin. Binding of calmodulin results in conformational change that relieves intrasteric autoinhibition and allows phosphorylation of Thr-177 within the activation loop by CaMKK1 or CaMKK2. Phosphorylation of Thr-177 results in several fold increase in total activity. Unlike CaMK4, is unable to exhibit autonomous activity after Ca(2+)/calmodulin activation. Its function is as follows. Calcium/calmodulin-dependent protein kinase that operates in the calcium-triggered CaMKK-CaMK1 signaling cascade and, upon calcium influx, regulates transcription activators activity, cell cycle, hormone production, cell differentiation, actin filament organization and neurite outgrowth. Recognizes the substrate consensus sequence [MVLIF]-x-R-x(2)-[ST]-x(3)-[MVLIF]. Regulates axonal extension and growth cone motility in hippocampal and cerebellar nerve cells. Upon NMDA receptor-mediated Ca(2+) elevation, promotes dendritic growth in hippocampal neurons and is essential in synapses for full long-term potentiation (LTP) and ERK2-dependent translational activation. Downstream of NMDA receptors, promotes the formation of spines and synapses in hippocampal neurons by phosphorylating ARHGEF7/BETAPIX on 'Ser-673', which results in the enhancement of ARHGEF7 activity and activation of RAC1. Promotes neuronal differentiation and neurite outgrowth by activation and phosphorylation of MARK2 on 'Ser-91', 'Ser-92', 'Ser-93' and 'Ser-294'. Promotes nuclear export of HDAC5 and binding to 14-3-3 by phosphorylation of 'Ser-259' and 'Ser-498' in the regulation of muscle cell differentiation. Regulates NUMB-mediated endocytosis by phosphorylation of NUMB on 'Ser-276' and 'Ser-295'. Involved in the regulation of basal and estrogen-stimulated migration of medulloblastoma cells through ARHGEF7/BETAPIX phosphorylation. Is required for proper activation of cyclin-D1/CDK4 complex during G1 progression in diploid fibroblasts. Plays a role in K(+) and ANG2-mediated regulation of the aldosterone synthase (CYP11B2) to produce aldosterone in the adrenal cortex. Phosphorylates EIF4G3/eIF4GII. In vitro phosphorylates CREB1, ATF1, CFTR, MYL9 and SYN1/synapsin I. This is Calcium/calmodulin-dependent protein kinase type 1 (Camk1) from Mus musculus (Mouse).